The following is a 362-amino-acid chain: Alternative oxidase, mitochondrial (362 aa).

The transit peptide at 1 to 64 (MNTPKVNILH…RNFSTTSVTR (64 aa)) directs the protein to the mitochondrion. A helical transmembrane segment spans residues 156–176 (LVRFIFLESIAGVPGMVAGML). Fe cation is bound by residues Glu163, Glu202, and His205. Residues 222 to 242 (LILGAQGVFFNAMFLSYLISP) traverse the membrane as a helical segment. Fe cation is bound by residues Glu253, Glu310, and His313.

It belongs to the alternative oxidase family. Homodimer; disulfide-linked. The cofactor is Fe cation.

It is found in the mitochondrion inner membrane. In terms of biological role, catalyzes cyanide-resistant oxygen consumption. May increase respiration when the cytochrome respiratory pathway is restricted, or in response to low temperatures. The polypeptide is Alternative oxidase, mitochondrial (aod-1) (Neurospora crassa (strain ATCC 24698 / 74-OR23-1A / CBS 708.71 / DSM 1257 / FGSC 987)).